Here is an 89-residue protein sequence, read N- to C-terminus: Small ribosomal subunit protein uS15 (89 aa).

It belongs to the universal ribosomal protein uS15 family. Part of the 30S ribosomal subunit. Forms a bridge to the 50S subunit in the 70S ribosome, contacting the 23S rRNA.

One of the primary rRNA binding proteins, it binds directly to 16S rRNA where it helps nucleate assembly of the platform of the 30S subunit by binding and bridging several RNA helices of the 16S rRNA. Functionally, forms an intersubunit bridge (bridge B4) with the 23S rRNA of the 50S subunit in the ribosome. In Bartonella tribocorum (strain CIP 105476 / IBS 506), this protein is Small ribosomal subunit protein uS15.